The chain runs to 705 residues: Phosphoribosylformylglycinamidine synthase subunit PurL (705 aa).

H32 is an active-site residue. Residue Y35 coordinates ATP. Residue E76 coordinates Mg(2+). Residues 77 to 80 and R99 each bind substrate; that span reads SHNH. H78 (proton acceptor) is an active-site residue. A Mg(2+)-binding site is contributed by D100. Q224 serves as a coordination point for substrate. D252 is a Mg(2+) binding site. Position 296–298 (296–298) interacts with substrate; it reads ESQ. ATP contacts are provided by D471 and G508. Residue N509 participates in Mg(2+) binding. S511 is a substrate binding site.

Belongs to the FGAMS family. Monomer. Part of the FGAM synthase complex composed of 1 PurL, 1 PurQ and 2 PurS subunits.

The protein localises to the cytoplasm. It carries out the reaction N(2)-formyl-N(1)-(5-phospho-beta-D-ribosyl)glycinamide + L-glutamine + ATP + H2O = 2-formamido-N(1)-(5-O-phospho-beta-D-ribosyl)acetamidine + L-glutamate + ADP + phosphate + H(+). It participates in purine metabolism; IMP biosynthesis via de novo pathway; 5-amino-1-(5-phospho-D-ribosyl)imidazole from N(2)-formyl-N(1)-(5-phospho-D-ribosyl)glycinamide: step 1/2. In terms of biological role, part of the phosphoribosylformylglycinamidine synthase complex involved in the purines biosynthetic pathway. Catalyzes the ATP-dependent conversion of formylglycinamide ribonucleotide (FGAR) and glutamine to yield formylglycinamidine ribonucleotide (FGAM) and glutamate. The FGAM synthase complex is composed of three subunits. PurQ produces an ammonia molecule by converting glutamine to glutamate. PurL transfers the ammonia molecule to FGAR to form FGAM in an ATP-dependent manner. PurS interacts with PurQ and PurL and is thought to assist in the transfer of the ammonia molecule from PurQ to PurL. This is Phosphoribosylformylglycinamidine synthase subunit PurL from Pyrococcus horikoshii (strain ATCC 700860 / DSM 12428 / JCM 9974 / NBRC 100139 / OT-3).